We begin with the raw amino-acid sequence, 591 residues long: V-type ATP synthase alpha chain (591 aa).

233–240 (GPFGAGKT) is a binding site for ATP.

It belongs to the ATPase alpha/beta chains family.

It catalyses the reaction ATP + H2O + 4 H(+)(in) = ADP + phosphate + 5 H(+)(out). Functionally, produces ATP from ADP in the presence of a proton gradient across the membrane. The V-type alpha chain is a catalytic subunit. This is V-type ATP synthase alpha chain from Streptococcus pneumoniae serotype 19F (strain G54).